A 716-amino-acid chain; its full sequence is Eosinophil peroxidase (716 aa).

The first 18 residues, Met1 to Thr18, serve as a signal peptide directing secretion. The propeptide occupies Gln19 to Glu140. N-linked (GlcNAc...) asparagine glycosylation is found at Asn53 and Asn114. Cys142 and Cys153 are disulfide-bonded. A heme b-binding site is contributed by Asp233. His234 acts as the Proton acceptor in catalysis. Asp235 serves as a coordination point for Ca(2+). 2 cysteine pairs are disulfide-bonded: Cys254/Cys264 and Cys258/Cys282. Ca(2+)-binding residues include Thr307, Phe309, Asp311, and Ser313. N-linked (GlcNAc...) asparagine glycosylation is found at Asn328 and Asn364. A disulfide bridge links Cys360 with Cys371. Residues Glu381 and His475 each contribute to the heme b site. A 3'-nitrotyrosine modification is found at Tyr489. Disulfide bonds link Cys579-Cys636 and Cys677-Cys702. Asn709 carries N-linked (GlcNAc...) asparagine glycosylation.

Belongs to the peroxidase family. XPO subfamily. Tetramer of two light chains and two heavy chains. Ca(2+) serves as cofactor. Heme b is required as a cofactor.

It is found in the cytoplasmic granule. It carries out the reaction 2 a phenolic donor + H2O2 = 2 a phenolic radical donor + 2 H2O. Functionally, mediates tyrosine nitration of secondary granule proteins in mature resting eosinophils. The polypeptide is Eosinophil peroxidase (Epx) (Mus musculus (Mouse)).